The primary structure comprises 376 residues: MLDLIQTRRDLHQIPEIGLEEFKTQAYLLDVIEKLTTGKDFVQIRTWRTGILVYLQGSQPERTIGWRTDIDGLPIVEQTGLPFASQHQGRMHACGHDFHMTIALGCLERALEEQPKNNLLFLFQPAEENEAGGMLMYEDDAFGDWLPDQFYGLHVRPDLKVGQIATNTHTLFAGTCEVKIRFKGKGGHAAFPHEANDALVAASYFVTQVQSVVSRNVNPIEGAVVTFGVFQAGTTNNVITDTAFLHGTIRALTQDMSLLVQKRVKTVAEGVAAAFDMEVEVELKQGGYLPVENNPALARELMDFFDEKDGIELIDIEPAMTGEDFGYLLSKVDGVMFWLGIDSPYALHHPQMSPKEEVLAIGVAAVSSFLKKKAAE.

The active site involves D69. The active-site Proton acceptor is E128.

This sequence belongs to the peptidase M20A family. N-acetyldiaminopimelate deacetylase subfamily.

It carries out the reaction N-acetyl-(2S,6S)-2,6-diaminopimelate + H2O = (2S,6S)-2,6-diaminopimelate + acetate. It participates in amino-acid biosynthesis; L-lysine biosynthesis via DAP pathway; LL-2,6-diaminopimelate from (S)-tetrahydrodipicolinate (acetylase route): step 3/3. Functionally, catalyzes the conversion of N-acetyl-diaminopimelate to diaminopimelate and acetate. The chain is N-acetyldiaminopimelate deacetylase from Streptococcus pneumoniae (strain JJA).